The following is a 201-amino-acid chain: Small ribosomal subunit protein uS4 (201 aa).

Residues 91-157 (SRLDNVVYRA…VPFQIARETA (67 aa)) enclose the S4 RNA-binding domain.

The protein belongs to the universal ribosomal protein uS4 family. Part of the 30S ribosomal subunit. Contacts protein S5. The interaction surface between S4 and S5 is involved in control of translational fidelity.

Its function is as follows. One of the primary rRNA binding proteins, it binds directly to 16S rRNA where it nucleates assembly of the body of the 30S subunit. In terms of biological role, with S5 and S12 plays an important role in translational accuracy. The chain is Small ribosomal subunit protein uS4 from Mycolicibacterium paratuberculosis (strain ATCC BAA-968 / K-10) (Mycobacterium paratuberculosis).